We begin with the raw amino-acid sequence, 393 residues long: ATP phosphoribosyltransferase regulatory subunit (393 aa).

This sequence belongs to the class-II aminoacyl-tRNA synthetase family. HisZ subfamily. As to quaternary structure, heteromultimer composed of HisG and HisZ subunits.

It localises to the cytoplasm. Its pathway is amino-acid biosynthesis; L-histidine biosynthesis; L-histidine from 5-phospho-alpha-D-ribose 1-diphosphate: step 1/9. In terms of biological role, required for the first step of histidine biosynthesis. May allow the feedback regulation of ATP phosphoribosyltransferase activity by histidine. The sequence is that of ATP phosphoribosyltransferase regulatory subunit from Synechococcus sp. (strain RCC307).